A 543-amino-acid polypeptide reads, in one-letter code: Chaperonin GroEL (543 aa).

Residues 29 to 32 (TVGP), 86 to 90 (DGTTT), Gly413, and Asp504 contribute to the ATP site.

Belongs to the chaperonin (HSP60) family. As to quaternary structure, forms a cylinder of 14 subunits composed of two heptameric rings stacked back-to-back. Interacts with the co-chaperonin GroES.

It is found in the cytoplasm. It catalyses the reaction ATP + H2O + a folded polypeptide = ADP + phosphate + an unfolded polypeptide.. Together with its co-chaperonin GroES, plays an essential role in assisting protein folding. The GroEL-GroES system forms a nano-cage that allows encapsulation of the non-native substrate proteins and provides a physical environment optimized to promote and accelerate protein folding. This chain is Chaperonin GroEL, found in Mycoplasma pneumoniae (strain ATCC 29342 / M129 / Subtype 1) (Mycoplasmoides pneumoniae).